The chain runs to 832 residues: Protein P (832 aa).

Residues 1–177 (MPLSYQHFRR…FCGSPYSWEQ (177 aa)) form a terminal protein domain (TP) region. Positions 178-335 (DLQHGAESIH…YCLSLIVNLL (158 aa)) are spacer. Disordered stretches follow at residues 186 to 218 (IHQQ…QSQQ) and 239 to 266 (TARR…SCLY). Residues 336–679 (EDWGPCDEYG…YLNLYPVARQ (344 aa)) form a polymerase/reverse transcriptase domain (RT) region. A Reverse transcriptase domain is found at 346 to 589 (EHHIRIPRTP…YSLHFMGYVI (244 aa)). 3 residues coordinate Mg(2+): Asp-418, Asp-540, and Asp-541.

The protein belongs to the hepadnaviridae P protein family.

The enzyme catalyses DNA(n) + a 2'-deoxyribonucleoside 5'-triphosphate = DNA(n+1) + diphosphate. It carries out the reaction Endonucleolytic cleavage to 5'-phosphomonoester.. Activated by host HSP70 and HSP40 in vitro to be able to bind the epsilon loop of the pgRNA. Because deletion of the RNase H region renders the protein partly chaperone-independent, the chaperones may be needed indirectly to relieve occlusion of the RNA-binding site by this domain. Inhibited by several reverse-transcriptase inhibitors: Lamivudine, Adefovir and Entecavir. Its function is as follows. Multifunctional enzyme that converts the viral RNA genome into dsDNA in viral cytoplasmic capsids. This enzyme displays a DNA polymerase activity that can copy either DNA or RNA templates, and a ribonuclease H (RNase H) activity that cleaves the RNA strand of RNA-DNA heteroduplexes in a partially processive 3'- to 5'-endonucleasic mode. Neo-synthesized pregenomic RNA (pgRNA) are encapsidated together with the P protein, and reverse-transcribed inside the nucleocapsid. Initiation of reverse-transcription occurs first by binding the epsilon loop on the pgRNA genome, and is initiated by protein priming, thereby the 5'-end of (-)DNA is covalently linked to P protein. Partial (+)DNA is synthesized from the (-)DNA template and generates the relaxed circular DNA (RC-DNA) genome. After budding and infection, the RC-DNA migrates in the nucleus, and is converted into a plasmid-like covalently closed circular DNA (cccDNA). The activity of P protein does not seem to be necessary for cccDNA generation, and is presumably released from (+)DNA by host nuclear DNA repair machinery. In Homo sapiens (Human), this protein is Protein P.